Reading from the N-terminus, the 288-residue chain is Protoheme IX farnesyltransferase (288 aa).

9 helical membrane-spanning segments follow: residues 16-36 (VWSL…PYFN), 37-57 (LHYI…SMGA), 88-108 (INGL…LAAF), 111-131 (LYAA…YSYL), 138-158 (WNII…WYTV), 162-182 (FSIL…IHVW), 210-230 (AICI…PAFF), 236-256 (VYMI…IVFV), and 265-285 (LKLF…VLIF).

This sequence belongs to the UbiA prenyltransferase family. Protoheme IX farnesyltransferase subfamily.

The protein localises to the cell membrane. It catalyses the reaction heme b + (2E,6E)-farnesyl diphosphate + H2O = Fe(II)-heme o + diphosphate. It participates in porphyrin-containing compound metabolism; heme O biosynthesis; heme O from protoheme: step 1/1. In terms of biological role, converts heme B (protoheme IX) to heme O by substitution of the vinyl group on carbon 2 of heme B porphyrin ring with a hydroxyethyl farnesyl side group. This Thermoplasma acidophilum (strain ATCC 25905 / DSM 1728 / JCM 9062 / NBRC 15155 / AMRC-C165) protein is Protoheme IX farnesyltransferase.